The following is a 449-amino-acid chain: Aminopeptidase C (449 aa).

Catalysis depends on residues Cys-70, His-364, and Asn-385.

This sequence belongs to the peptidase C1 family. In terms of assembly, homohexamer.

Its subcellular location is the cytoplasm. It carries out the reaction Inactivates bleomycin B2 (a cytotoxic glycometallopeptide) by hydrolysis of a carboxyamide bond of beta-aminoalanine, but also shows general aminopeptidase activity. The specificity varies somewhat with source, but amino acid arylamides of Met, Leu and Ala are preferred.. This chain is Aminopeptidase C (pepC), found in Lactobacillus delbrueckii subsp. lactis.